A 318-amino-acid chain; its full sequence is Tumor necrosis factor ligand superfamily member 11 (318 aa).

Residues 1-47 (MRRANRDYGKYLRGSEEMGSCPGVPHEGPLHPAPSAPAPAPPPAASR) lie on the Cytoplasmic side of the membrane. Residues 13-41 (RGSEEMGSCPGVPHEGPLHPAPSAPAPAP) are disordered. Residues 31 to 41 (HPAPSAPAPAP) are compositionally biased toward pro residues. Residues 48–68 (FMFLALLGLGLGQVVCSIALF) traverse the membrane as a helical; Signal-anchor for type II membrane protein segment. The Extracellular portion of the chain corresponds to 69–318 (LYFRAQMDPN…FGAFKVQDID (250 aa)). The THD domain maps to 165–314 (PFAHLTINAA…DATYFGAFKV (150 aa)). N-linked (GlcNAc...) asparagine glycosylation is found at asparagine 199 and asparagine 264.

Belongs to the tumor necrosis factor family. As to quaternary structure, homotrimer. Interacts with TNFRSF11A and TNFRSF11B. Interacts with FBN1 (via N-terminal domain) in a Ca(+2)-dependent manner. Interacts with TNFAIP6 (via both Link and CUB domains). The soluble form derives from the membrane form by proteolytic processing. Highly expressed in thymus and bone tissues.

It is found in the cell membrane. The protein localises to the secreted. Cytokine that binds to TNFRSF11B/OPG and to TNFRSF11A/RANK. Osteoclast differentiation and activation factor. Augments the ability of dendritic cells to stimulate naive T-cell proliferation. May be an important regulator of interactions between T-cells and dendritic cells and may play a role in the regulation of the T-cell-dependent immune response. May also play an important role in enhanced bone-resorption in humoral hypercalcemia of malignancy. Induces osteoclastogenesis by activating multiple signaling pathways in osteoclast precursor cells, chief among which is induction of long lasting oscillations in the intracellular concentration of Ca (2+) resulting in the activation of NFATC1, which translocates to the nucleus and induces osteoclast-specific gene transcription to allow differentiation of osteoclasts. During osteoclast differentiation, in a TMEM64 and ATP2A2-dependent manner induces activation of CREB1 and mitochondrial ROS generation necessary for proper osteoclast generation. The chain is Tumor necrosis factor ligand superfamily member 11 (Tnfsf11) from Rattus norvegicus (Rat).